The primary structure comprises 442 residues: DNA N(6)-methyladenine demethylase ALKBH1D (442 aa).

The segment covering 135–144 has biased composition (polar residues); that stretch reads SMVHFDSTNP. The tract at residues 135-185 is disordered; that stretch reads SMVHFDSTNPSSSSKSSQSQNLKIRKVRNHRNSGFKSRDQSPQRIKDPPPF. Residues 145–154 show a composition bias toward low complexity; the sequence is SSSSKSSQSQ. A compositionally biased stretch (basic residues) spans 157 to 167; sequence KIRKVRNHRNS. Over residues 170 to 183 the composition is skewed to basic and acidic residues; the sequence is KSRDQSPQRIKDPP. Positions 332 to 442 constitute a Fe2OG dioxygenase domain; the sequence is SPDICIVNFY…GRLNLTFRHF (111 aa). 339–341 lines the 2-oxoglutarate pocket; the sequence is NFY. Fe cation is bound by residues His350, Asp352, and His410. 434-440 contacts 2-oxoglutarate; that stretch reads RLNLTFR.

It belongs to the alkB family. It depends on Fe(2+) as a cofactor. In terms of tissue distribution, expressed at low levels in roots, seedlings and rosette leaves, but barely in cauline leaves, stems, siliques and flowers.

It is found in the nucleus. The protein resides in the cytoplasm. It carries out the reaction an N(6)-methyl-2'-deoxyadenosine in DNA + 2-oxoglutarate + O2 = a 2'-deoxyadenosine in DNA + formaldehyde + succinate + CO2. In terms of biological role, dioxygenase that catalyzes DNA N(6)-methyladenine (6 mA) demethylation to modulate gene expression and regulate seed germination. The chain is DNA N(6)-methyladenine demethylase ALKBH1D from Arabidopsis thaliana (Mouse-ear cress).